Consider the following 82-residue polypeptide: Cytochrome b559 subunit alpha (82 aa).

The helical transmembrane segment at 22–36 (VIHSITIPALFIAGW) threads the bilayer. Heme is bound at residue H24.

This sequence belongs to the PsbE/PsbF family. Heterodimer of an alpha subunit and a beta subunit. PSII is composed of 1 copy each of membrane proteins PsbA, PsbB, PsbC, PsbD, PsbE, PsbF, PsbH, PsbI, PsbJ, PsbK, PsbL, PsbM, PsbT, PsbX, PsbY, PsbZ, Psb30/Ycf12, peripheral proteins PsbO, CyanoQ (PsbQ), PsbU, PsbV and a large number of cofactors. It forms dimeric complexes. Heme b is required as a cofactor.

The protein resides in the cellular thylakoid membrane. Its function is as follows. This b-type cytochrome is tightly associated with the reaction center of photosystem II (PSII). PSII is a light-driven water:plastoquinone oxidoreductase that uses light energy to abstract electrons from H(2)O, generating O(2) and a proton gradient subsequently used for ATP formation. It consists of a core antenna complex that captures photons, and an electron transfer chain that converts photonic excitation into a charge separation. The chain is Cytochrome b559 subunit alpha from Trichodesmium erythraeum (strain IMS101).